We begin with the raw amino-acid sequence, 123 residues long: MQNKIQVKSVKERENALIFCAENTEIEVKELTARNHVLVDSDHLSFLYILENESSFVYVSIPHTCWEAMREAMQQDKKMFVHVNDMEIELEQLKEELEYLIRNIEGNANYGEELVSAVEKVFL.

The protein belongs to the UPF0738 family.

The chain is UPF0738 protein Bcer98_0913 from Bacillus cytotoxicus (strain DSM 22905 / CIP 110041 / 391-98 / NVH 391-98).